Here is a 488-residue protein sequence, read N- to C-terminus: MAKALMLQGTGSDVGKTLIVAGLCRAYMRRGLRVRPFKPQNMSNNAAVTLDGGEIGRAQALQAQACGVPPSVHMNPVLLKPQSGTGSQIILQGRLSGQAEARTYQAMKKHWLAIVLESFQHLKDEADLVLVEGAGSASEINLRANDIANMGFARAADVPVIVIGDIDRGGVIAQIAGTKLVITPQDAEMVVGFLVNRFRGDPDLFKEGMRQIEHFSGWRGLGLIPHCPAARDLPAEDAMALGRHLNGERSAHTKFKIVVPVLPGIANFDDLDPLRMERGVELIMIRPGTYLPVEADLVLLIGSKTTIADLVAFREAGWDVDLAAYVRRGGKVFGLCGGYQMLGENLRDPLGLEGPPSEVRGLGLLALETVFTQEKTLVAVEGVSLPDEVPFTGFEMHVGHTSGDDCARPFLRLTDGRQDGAVSKDGRIAGCYVHGLFGMDTQRRAFLARFGVAAGDFSYLEKVEAALDAVADHLAQHIDLDHLLTLAR.

The region spanning Lys254 to Gln442 is the GATase cobBQ-type domain. The active-site Nucleophile is the Cys336. The active site involves His434.

It belongs to the CobB/CobQ family. CobQ subfamily.

It participates in cofactor biosynthesis; adenosylcobalamin biosynthesis. Catalyzes amidations at positions B, D, E, and G on adenosylcobyrinic A,C-diamide. NH(2) groups are provided by glutamine, and one molecule of ATP is hydrogenolyzed for each amidation. The protein is Cobyric acid synthase of Beijerinckia indica subsp. indica (strain ATCC 9039 / DSM 1715 / NCIMB 8712).